Consider the following 666-residue polypeptide: Calcium/calmodulin-dependent protein kinase type II subunit beta (666 aa).

Residues 14–272 enclose the Protein kinase domain; the sequence is YQLYEDIGKG…AHEALKHPWV (259 aa). A Phosphotyrosine modification is found at Tyr17. ATP is bound by residues 20 to 28 and Lys43; that span reads IGKGAFSVV. The Proton acceptor role is filled by Asp136. The interval 283–292 is autoinhibitory domain; it reads HRQETVECLK. Thr287 carries the post-translational modification Phosphothreonine; by autocatalysis. The interval 291 to 301 is calmodulin-binding; sequence LKKFNARRKLK. 2 positions are modified to phosphothreonine; by autocatalysis: Thr306 and Thr307. Residues 349–534 form a disordered region; it reads ADGVKPQTNS…IPGPLPTPSR (186 aa). Residues 354-369 are compositionally biased toward polar residues; the sequence is PQTNSTKNSAAATSPK. 3 positions are modified to phosphoserine: Ser367, Ser394, and Ser397. Thr400 and Thr401 each carry phosphothreonine. Pro residues predominate over residues 432–447; the sequence is LPCPSPAPFSPLPAPS. The segment covering 479-491 has biased composition (low complexity); sequence SPALLGPLSSPSP. Residues 514-531 show a composition bias toward pro residues; the sequence is PVGPPPCPSPTIPGPLPT.

It belongs to the protein kinase superfamily. CAMK Ser/Thr protein kinase family. CaMK subfamily. CAMK2 is composed of 4 different chains: alpha (CAMK2A), beta (CAMK2B), gamma (CAMK2G), and delta (CAMK2D). The different isoforms assemble into homo- or heteromultimeric holoenzymes composed of 12 subunits with two hexameric rings stacked one on top of the other. Interacts with SYNGAP1 and CAMK2N2. Interacts with MPDZ. Interacts with FOXO3. Interacts (when in a kinase inactive state not associated with calmodulin) with ARC; leading to target ARC to inactive synapses. Interacts with CAMK2N1; this interaction requires CAMK2B activation by Ca(2+). Post-translationally, autophosphorylation of Thr-287 following activation by Ca(2+)/calmodulin. Phosphorylation of Thr-287 locks the kinase into an activated state. Widely expressed. Expressed in adult and fetal brain. Expression is slightly lower in fetal brain. Expressed in skeletal muscle.

It is found in the cytoplasm. It localises to the cytoskeleton. The protein resides in the microtubule organizing center. Its subcellular location is the centrosome. The protein localises to the sarcoplasmic reticulum membrane. It is found in the synapse. The catalysed reaction is L-seryl-[protein] + ATP = O-phospho-L-seryl-[protein] + ADP + H(+). It catalyses the reaction L-threonyl-[protein] + ATP = O-phospho-L-threonyl-[protein] + ADP + H(+). Activated by Ca(2+)/calmodulin. Binding of calmodulin results in conformational change that relieves intrasteric autoinhibition and allows autophosphorylation of Thr-287 which turns the kinase in a constitutively active form and confers to the kinase a Ca(2+)-independent activity. Calcium/calmodulin-dependent protein kinase that functions autonomously after Ca(2+)/calmodulin-binding and autophosphorylation, and is involved in dendritic spine and synapse formation, neuronal plasticity and regulation of sarcoplasmic reticulum Ca(2+) transport in skeletal muscle. In neurons, plays an essential structural role in the reorganization of the actin cytoskeleton during plasticity by binding and bundling actin filaments in a kinase-independent manner. This structural function is required for correct targeting of CaMK2A, which acts downstream of NMDAR to promote dendritic spine and synapse formation and maintain synaptic plasticity which enables long-term potentiation (LTP) and hippocampus-dependent learning. In developing hippocampal neurons, promotes arborization of the dendritic tree and in mature neurons, promotes dendritic remodeling. Also regulates the migration of developing neurons. Participates in the modulation of skeletal muscle function in response to exercise. In slow-twitch muscles, is involved in regulation of sarcoplasmic reticulum (SR) Ca(2+) transport and in fast-twitch muscle participates in the control of Ca(2+) release from the SR through phosphorylation of triadin, a ryanodine receptor-coupling factor, and phospholamban (PLN/PLB), an endogenous inhibitor of SERCA2A/ATP2A2. In response to interferon-gamma (IFN-gamma) stimulation, catalyzes phosphorylation of STAT1, stimulating the JAK-STAT signaling pathway. Phosphorylates reticulophagy regulator RETREG1 at 'Ser-151' under endoplasmic reticulum stress conditions which enhances RETREG1 oligomerization and its membrane scission and reticulophagy activity. The protein is Calcium/calmodulin-dependent protein kinase type II subunit beta (CAMK2B) of Homo sapiens (Human).